Reading from the N-terminus, the 121-residue chain is Large ribosomal subunit protein bL12 (121 aa).

It belongs to the bacterial ribosomal protein bL12 family. Homodimer. Part of the ribosomal stalk of the 50S ribosomal subunit. Forms a multimeric L10(L12)X complex, where L10 forms an elongated spine to which 2 to 4 L12 dimers bind in a sequential fashion. Binds GTP-bound translation factors.

Functionally, forms part of the ribosomal stalk which helps the ribosome interact with GTP-bound translation factors. Is thus essential for accurate translation. The sequence is that of Large ribosomal subunit protein bL12 from Macrococcus caseolyticus (strain JCSC5402) (Macrococcoides caseolyticum).